The primary structure comprises 257 residues: Probable enoyl-CoA hydratase echA8 (257 aa).

It belongs to the enoyl-CoA hydratase/isomerase family.

It carries out the reaction a (3S)-3-hydroxyacyl-CoA = a (2E)-enoyl-CoA + H2O. The catalysed reaction is a 4-saturated-(3S)-3-hydroxyacyl-CoA = a (3E)-enoyl-CoA + H2O. Could possibly oxidize fatty acids using specific components. In Mycobacterium leprae (strain TN), this protein is Probable enoyl-CoA hydratase echA8 (echA8).